The following is a 361-amino-acid chain: Peptide chain release factor 1 (361 aa).

Q236 bears the N5-methylglutamine mark.

This sequence belongs to the prokaryotic/mitochondrial release factor family. In terms of processing, methylated by PrmC. Methylation increases the termination efficiency of RF1.

The protein resides in the cytoplasm. Functionally, peptide chain release factor 1 directs the termination of translation in response to the peptide chain termination codons UAG and UAA. This Levilactobacillus brevis (strain ATCC 367 / BCRC 12310 / CIP 105137 / JCM 1170 / LMG 11437 / NCIMB 947 / NCTC 947) (Lactobacillus brevis) protein is Peptide chain release factor 1.